Consider the following 123-residue polypeptide: Small ribosomal subunit protein uS12 (123 aa).

3-methylthioaspartic acid is present on aspartate 89.

Belongs to the universal ribosomal protein uS12 family. In terms of assembly, part of the 30S ribosomal subunit. Contacts proteins S8 and S17. May interact with IF1 in the 30S initiation complex.

With S4 and S5 plays an important role in translational accuracy. Functionally, interacts with and stabilizes bases of the 16S rRNA that are involved in tRNA selection in the A site and with the mRNA backbone. Located at the interface of the 30S and 50S subunits, it traverses the body of the 30S subunit contacting proteins on the other side and probably holding the rRNA structure together. The combined cluster of proteins S8, S12 and S17 appears to hold together the shoulder and platform of the 30S subunit. The protein is Small ribosomal subunit protein uS12 of Brucella anthropi (strain ATCC 49188 / DSM 6882 / CCUG 24695 / JCM 21032 / LMG 3331 / NBRC 15819 / NCTC 12168 / Alc 37) (Ochrobactrum anthropi).